Here is a 198-residue protein sequence, read N- to C-terminus: Proteasome subunit beta 1 (198 aa).

A propeptide spans 1–6 (MSGPGA) (removed in mature form; by autocatalysis). Thr7 serves as the catalytic Nucleophile.

The protein belongs to the peptidase T1B family. The 20S proteasome core is composed of 14 alpha and 14 beta subunits that assemble into four stacked heptameric rings, resulting in a barrel-shaped structure. The two inner rings, each composed of seven catalytic beta subunits, are sandwiched by two outer rings, each composed of seven alpha subunits. The catalytic chamber with the active sites is on the inside of the barrel. Has a gated structure, the ends of the cylinder being occluded by the N-termini of the alpha-subunits. Is capped at one or both ends by the proteasome regulatory ATPase, PAN.

It is found in the cytoplasm. It carries out the reaction Cleavage of peptide bonds with very broad specificity.. Its activity is regulated as follows. The formation of the proteasomal ATPase PAN-20S proteasome complex, via the docking of the C-termini of PAN into the intersubunit pockets in the alpha-rings, triggers opening of the gate for substrate entry. Interconversion between the open-gate and close-gate conformations leads to a dynamic regulation of the 20S proteasome proteolysis activity. Component of the proteasome core, a large protease complex with broad specificity involved in protein degradation. The sequence is that of Proteasome subunit beta 1 from Ignicoccus hospitalis (strain KIN4/I / DSM 18386 / JCM 14125).